Here is a 210-residue protein sequence, read N- to C-terminus: Probable HTH-type transcriptional regulator ArpR (210 aa).

Residues glutamine 10–histidine 70 enclose the HTH tetR-type domain. Positions threonine 33–phenylalanine 52 form a DNA-binding region, H-T-H motif.

Functionally, probable regulatory protein for the antibiotic efflux pump arpABC operon. May function as a repressor. The sequence is that of Probable HTH-type transcriptional regulator ArpR (arpR) from Pseudomonas putida (Arthrobacter siderocapsulatus).